The primary structure comprises 261 residues: 1-(5-phosphoribosyl)-5-[(5-phosphoribosylamino)methylideneamino] imidazole-4-carboxamide isomerase (261 aa).

The active-site Proton acceptor is Asp15. The Proton donor role is filled by Asp136.

Belongs to the HisA/HisF family.

Its subcellular location is the cytoplasm. The catalysed reaction is 1-(5-phospho-beta-D-ribosyl)-5-[(5-phospho-beta-D-ribosylamino)methylideneamino]imidazole-4-carboxamide = 5-[(5-phospho-1-deoxy-D-ribulos-1-ylimino)methylamino]-1-(5-phospho-beta-D-ribosyl)imidazole-4-carboxamide. Its pathway is amino-acid biosynthesis; L-histidine biosynthesis; L-histidine from 5-phospho-alpha-D-ribose 1-diphosphate: step 4/9. The polypeptide is 1-(5-phosphoribosyl)-5-[(5-phosphoribosylamino)methylideneamino] imidazole-4-carboxamide isomerase (Synechococcus sp. (strain JA-3-3Ab) (Cyanobacteria bacterium Yellowstone A-Prime)).